A 655-amino-acid polypeptide reads, in one-letter code: p-hydroxybenzoic acid efflux pump subunit AaeB (655 aa).

11 consecutive transmembrane segments (helical) span residues Phe13–Leu33, Trp38–Pro58, Leu69–Ile89, Leu93–Val113, Trp121–Leu141, Glu152–Ile172, Leu370–Val390, Phe407–Pro427, Gln431–Val451, Met459–Phe479, and Phe482–Leu502.

It belongs to the aromatic acid exporter ArAE (TC 2.A.85) family.

It localises to the cell inner membrane. Functionally, forms an efflux pump with AaeA. Could function as a metabolic relief valve, allowing to eliminate certain compounds when they accumulate to high levels in the cell. The polypeptide is p-hydroxybenzoic acid efflux pump subunit AaeB (Shigella boydii serotype 18 (strain CDC 3083-94 / BS512)).